The following is a 196-amino-acid chain: MNADQTLLVLASASPRRRELLAQLDIRFTVSAADIDETPHAGEAAEAYVGRLAREKAHVVASRHPGAWVLAADTTVALGAELLGKPRDAEEAQAMLTRLSGRTHDVYTGVALAGRHEETLVVRTRVTFRALSSGEMSWYANSGEPLDKAGAYAIQGKGGFLVAGVEGSTSNVVGLPLGETVALLERAGLPLPWRAS.

The active-site Proton acceptor is Asp-73.

Belongs to the Maf family. YhdE subfamily. It depends on a divalent metal cation as a cofactor.

The protein localises to the cytoplasm. It carries out the reaction dTTP + H2O = dTMP + diphosphate + H(+). It catalyses the reaction UTP + H2O = UMP + diphosphate + H(+). Nucleoside triphosphate pyrophosphatase that hydrolyzes dTTP and UTP. May have a dual role in cell division arrest and in preventing the incorporation of modified nucleotides into cellular nucleic acids. This Myxococcus xanthus (strain DK1622) protein is dTTP/UTP pyrophosphatase.